The following is a 246-amino-acid chain: MQALLFLMALLLPSGAGAEEIIGGVEARPHSRPYMAHLKIITDRGSEDRCGGFLIAPQFVLTAAHCKGREITVTLGAHDVSKSESTQQRIKVEKQIIHKNYNVSFNLYDIMLLKLEEKAELTPTVDVIPLPGPSDFIDPGKMCWTAGWGKTGEKEPTSETLREVELRIMDKEACKMYKHYDYNFQVCVGSSTKLKTAYMGDSGGPLLCAGVAHGIVSYGDSHGKPPAVFTRISAYVPWIKTVINGK.

Positions 1-18 are cleaved as a signal peptide; the sequence is MQALLFLMALLLPSGAGA. The propeptide at 19 to 20 is activation peptide; sequence EE. Positions 21–244 constitute a Peptidase S1 domain; sequence IIGGVEARPH…YVPWIKTVIN (224 aa). A disulfide bridge connects residues cysteine 50 and cysteine 66. Histidine 65 functions as the Charge relay system in the catalytic mechanism. An N-linked (GlcNAc...) asparagine glycan is attached at asparagine 102. Aspartate 109 serves as the catalytic Charge relay system. 2 cysteine pairs are disulfide-bonded: cysteine 143–cysteine 208 and cysteine 174–cysteine 187. The active-site Charge relay system is the serine 202.

It belongs to the peptidase S1 family. Granzyme subfamily. As to expression, mucosal mast cells.

It is found in the secreted. Its subcellular location is the cytoplasmic granule. Has a chymotrypsin-like activity. In Mus musculus (Mouse), this protein is Mast cell protease 1 (Mcpt1).